A 451-amino-acid polypeptide reads, in one-letter code: BSD domain-containing protein 1 (451 aa).

In terms of domain architecture, BSD spans 146 to 198; that stretch reads WLSRFSLEEKKGEIAELLATSPSIRALYTKMVPAAVSHSEFWQRYFYKVHRLE. Disordered regions lie at residues 252–296 and 309–424; these read SAAL…SLVT and LQTG…DLDM. Residues 275-295 are compositionally biased toward low complexity; the sequence is PPELAPAEGSPSESSESVSLV. Residues 309 to 320 are compositionally biased toward polar residues; that stretch reads LQTGVQPSGNRD. Residues 365 to 388 show a composition bias toward basic and acidic residues; the sequence is KEVESKAQGRTETLKEEGPTDLRV. Over residues 392–411 the composition is skewed to polar residues; sequence NSDSGKSTPSNNGKKGSSTD. Residues 412–424 show a composition bias toward acidic residues; sequence ISEDWEKDFDLDM.

The sequence is that of BSD domain-containing protein 1 (BSDC1) from Gallus gallus (Chicken).